Here is a 75-residue protein sequence, read N- to C-terminus: Conotoxin Vt15.1 (75 aa).

An N-terminal signal peptide occupies residues M1 to G19. Positions Q20–V43 are excised as a propeptide. W73 carries the tryptophan amide modification.

This sequence belongs to the conotoxin V superfamily. In terms of processing, contains 4 disulfide bonds. As to expression, expressed by the venom duct.

The protein localises to the secreted. The sequence is that of Conotoxin Vt15.1 from Conus planorbis (Planorbis cone).